The sequence spans 82 residues: NAD(P)H-quinone oxidoreductase subunit O, organellar chromatophore (82 aa).

The protein belongs to the complex I NdhO subunit family. NDH-1 can be composed of about 15 different subunits; different subcomplexes with different compositions have been identified which probably have different functions.

It localises to the plastid. The protein resides in the organellar chromatophore thylakoid membrane. It catalyses the reaction a plastoquinone + NADH + (n+1) H(+)(in) = a plastoquinol + NAD(+) + n H(+)(out). It carries out the reaction a plastoquinone + NADPH + (n+1) H(+)(in) = a plastoquinol + NADP(+) + n H(+)(out). Its function is as follows. NDH-1 shuttles electrons from an unknown electron donor, via FMN and iron-sulfur (Fe-S) centers, to quinones in the respiratory and/or the photosynthetic chain. The immediate electron acceptor for the enzyme in this species is believed to be plastoquinone. Couples the redox reaction to proton translocation, and thus conserves the redox energy in a proton gradient. Cyanobacterial NDH-1 also plays a role in inorganic carbon-concentration. The protein is NAD(P)H-quinone oxidoreductase subunit O, organellar chromatophore of Paulinella chromatophora.